The following is a 157-amino-acid chain: Transcriptional repressor NrdR (157 aa).

The disordered stretch occupies residues 1–21; sequence MRCPYCGSEDSQVKDSRPAED. Residues 3-34 fold into a zinc finger; sequence CPYCGSEDSQVKDSRPAEDGNAIRRRRICPDC. The segment covering 11-21 has biased composition (basic and acidic residues); sequence SQVKDSRPAED. Positions 49–139 constitute an ATP-cone domain; that stretch reads LMIIKKTGRK…VYRDFSHAED (91 aa).

This sequence belongs to the NrdR family. Zn(2+) is required as a cofactor.

In terms of biological role, negatively regulates transcription of bacterial ribonucleotide reductase nrd genes and operons by binding to NrdR-boxes. The chain is Transcriptional repressor NrdR from Sinorhizobium medicae (strain WSM419) (Ensifer medicae).